The primary structure comprises 563 residues: Chitinase A (563 aa).

The signal sequence occupies residues 1 to 23 (MRKFNKPLLALLIGSTLCSAAQA). In terms of domain architecture, GH18 spans 158-559 (KVVGSYFVEW…NSMNASLGNS (402 aa)). The active-site Proton donor is Glu315.

Belongs to the glycosyl hydrolase 18 family. Chitinase class II subfamily.

The enzyme catalyses Random endo-hydrolysis of N-acetyl-beta-D-glucosaminide (1-&gt;4)-beta-linkages in chitin and chitodextrins.. The protein is Chitinase A (chiA) of Serratia marcescens.